A 395-amino-acid chain; its full sequence is Tyrosine--tRNA ligase 2 (395 aa).

Residues 42–51 (PTAPDIHLGH) carry the 'HIGH' region motif. The 'KMSKS' region motif lies at 226–230 (KMSKS). Residue Lys-229 participates in ATP binding. One can recognise an S4 RNA-binding domain in the interval 334–394 (TPVANLLKDA…GKRKFARITI (61 aa)).

It belongs to the class-I aminoacyl-tRNA synthetase family. TyrS type 2 subfamily. In terms of assembly, homodimer.

It localises to the cytoplasm. The catalysed reaction is tRNA(Tyr) + L-tyrosine + ATP = L-tyrosyl-tRNA(Tyr) + AMP + diphosphate + H(+). Catalyzes the attachment of tyrosine to tRNA(Tyr) in a two-step reaction: tyrosine is first activated by ATP to form Tyr-AMP and then transferred to the acceptor end of tRNA(Tyr). This is Tyrosine--tRNA ligase 2 from Vibrio parahaemolyticus serotype O3:K6 (strain RIMD 2210633).